Reading from the N-terminus, the 354-residue chain is MGCTLSAEDKAAVERSKMIDRNLREDGEKAAREVKLLLLGAGESGKSTIVKQMKIIHEAGYSEEECKQYKAVVYSNTIQSIIAIIRAMGRLKIDFGDAARADDARQLFVLAGAAEEGFMTAELAGVIKRLWKDSGVQACFNRSREYQLNDSAAYYLNDLDRIAQPNYIPTQQDVLRTRVKTTGIVETHFTFKDLHFKMFDVGGQRSERKKWIHCFEGVTAIIFCVALSDYDLVLAEDEEMNRMHESMKLFDSICNNKWFTDTSIILFLNKKDLFEEKIKKSPLTICYPEYAGSNTYEEAAAYIQCQFEDLNKRKDTKEIYTHFTCATDTKNVQFVFDAVTDVIIKNNLKDCGLF.

G2 is lipidated: N-myristoyl glycine. The S-palmitoyl cysteine moiety is linked to residue C3. One can recognise a G-alpha domain in the interval 32 to 354 (REVKLLLLGA…KNNLKDCGLF (323 aa)). Residues 35 to 48 (KLLLLGAGESGKST) are G1 motif. Residues 43-48 (ESGKST), 150-151 (DS), and 175-178 (LRTR) each bind GTP. Residue S47 coordinates Mg(2+). Residues 173 to 181 (DVLRTRVKT) form a G2 motif region. Mg(2+) is bound at residue T181. The segment at 196–205 (FKMFDVGGQR) is G3 motif. GTP is bound by residues 200-204 (DVGGQ), 269-272 (NKKD), and A326. The interval 265–272 (ILFLNKKD) is G4 motif. Residues 324–329 (TCATDT) form a G5 motif region.

Belongs to the G-alpha family. G(i/o/t/z) subfamily. Heterotrimeric G proteins are composed of 3 units; alpha, beta and gamma. The alpha chain contains the guanine nucleotide binding site. Part of a spindle orientation complex at least composed of GNAI1, GPSM2 and NUMA1. Identified in complex with the beta subunit GNB1 and the gamma subunit GNG1. Identified in complex with the beta subunit GNB1 and the gamma subunit GNG2. Component of the TAS2R14-GNAI1 complex, consisting of TAS2R14, GNAI1, GNB1 and GNG2; within the complex interacts with TAS2R14; this complex plays a role in the perception of bitterness. GTP binding causes dissociation of the heterotrimer, liberating the individual subunits so that they can interact with downstream effector proteins. Interacts (GDP-bound form) with GPSM1; this inhibits guanine nucleotide exchange and GTP binding. Interacts (GDP-bound form) with GPSM2 (via GoLoco domains); this inhibits guanine nucleotide exchange. Interacts with RGS10; this strongly enhances GTP hydrolysis. Interacts with RGS1 and RGS16. Interacts with RGS4. Interacts with RGS12. Interacts (via active GTP- or inactive GDP-bound forms) with RGS14 (via RGS and GoLoco domains). Interacts with RGS3, RGS6, RGS7, RGS8, RGS17, RGS18 and RGS20 (in vitro). Interacts (GDP-bound form) with RIC8A (via C-terminus); promoting GNAI1 folding and association with the plasma membrane. Interacts (inactive GDP-bound form) with NUCB1 (via GBA motif); the interaction leads to activation of GNAI1. Interacts (inactive GDP-bound form) with CCDC88C/DAPLE (via GBA motif); the interaction leads to activation of GNAI1. Interacts (inactive GDP-bound form) with CCDC8A/GIV (via GBA motif). Interacts with GPR15. In terms of processing, myristoylation at Gly-2 is required for membrane anchoring before palmitoylation. Post-translationally, palmitoylation at Cys-3 varies with membrane lipid composition.

Its subcellular location is the nucleus. It is found in the cytoplasm. It localises to the cell membrane. The protein resides in the cytoskeleton. The protein localises to the microtubule organizing center. Its subcellular location is the centrosome. It is found in the cell cortex. It localises to the membrane. The enzyme catalyses GTP + H2O = GDP + phosphate + H(+). In terms of biological role, guanine nucleotide-binding proteins (G proteins) function as transducers downstream of G protein-coupled receptors (GPCRs) in numerous signaling cascades. The alpha chain contains the guanine nucleotide binding site and alternates between an active, GTP-bound state and an inactive, GDP-bound state. Signaling by an activated GPCR promotes GDP release and GTP binding. The alpha subunit has a low GTPase activity that converts bound GTP to GDP, thereby terminating the signal. Both GDP release and GTP hydrolysis are modulated by numerous regulatory proteins. Signaling is mediated via effector proteins, such as adenylate cyclase. Inhibits adenylate cyclase activity of ADCY1, ADCY5 and ADCY6, leading to decreased intracellular cAMP levels. The inactive GDP-bound form prevents the association of RGS14 with centrosomes and is required for the translocation of RGS14 from the cytoplasm to the plasma membrane. Required for normal cytokinesis during mitosis. Required for cortical dynein-dynactin complex recruitment during metaphase. This Rattus norvegicus (Rat) protein is Guanine nucleotide-binding protein G(i) subunit alpha-1 (Gnai1).